Reading from the N-terminus, the 175-residue chain is Cytochrome c-550-like protein (175 aa).

The first 34 residues, 1–34 (MYQPHFWQRSIGWLCGGLLILLLGWTIAPATALA), serve as a signal peptide directing secretion. Heme c contacts are provided by C81, C84, H85, and C135.

This sequence belongs to the cytochrome c family. PsbV subfamily. Heme c is required as a cofactor.

It localises to the cellular thylakoid membrane. Its function is as follows. Probable low-potential cytochrome c, can partially replace cytochrome c-550 (PsbV) function. This is Cytochrome c-550-like protein from Thermosynechococcus vestitus (strain NIES-2133 / IAM M-273 / BP-1).